The sequence spans 429 residues: tRNA(Ile2) 2-agmatinylcytidine synthetase TiaS (429 aa).

The disordered stretch occupies residues 403–429 (KPPERPLHPSKSLEPPSTPIHSDTISL).

The protein belongs to the TiaS family.

Its subcellular location is the cytoplasm. The enzyme catalyses cytidine(34) in tRNA(Ile2) + agmatine + ATP + H2O = 2-agmatinylcytidine(34) in tRNA(Ile2) + AMP + 2 phosphate + 2 H(+). Functionally, ATP-dependent agmatine transferase that catalyzes the formation of 2-agmatinylcytidine (agm2C) at the wobble position (C34) of tRNA(Ile2), converting the codon specificity from AUG to AUA. This Hyperthermus butylicus (strain DSM 5456 / JCM 9403 / PLM1-5) protein is tRNA(Ile2) 2-agmatinylcytidine synthetase TiaS.